The primary structure comprises 279 residues: 2-dehydro-3-deoxyphosphooctonate aldolase (279 aa).

The protein belongs to the KdsA family.

It localises to the cytoplasm. It catalyses the reaction D-arabinose 5-phosphate + phosphoenolpyruvate + H2O = 3-deoxy-alpha-D-manno-2-octulosonate-8-phosphate + phosphate. The protein operates within carbohydrate biosynthesis; 3-deoxy-D-manno-octulosonate biosynthesis; 3-deoxy-D-manno-octulosonate from D-ribulose 5-phosphate: step 2/3. Its pathway is bacterial outer membrane biogenesis; lipopolysaccharide biosynthesis. This chain is 2-dehydro-3-deoxyphosphooctonate aldolase, found in Bartonella henselae (strain ATCC 49882 / DSM 28221 / CCUG 30454 / Houston 1) (Rochalimaea henselae).